We begin with the raw amino-acid sequence, 319 residues long: Aliphatic sulfonates import ATP-binding protein SsuB 1 (319 aa).

The 220-residue stretch at 63 to 282 folds into the ABC transporter domain; that stretch reads VTLSGVSKRF…ARASAAFAAL (220 aa). Residue 95 to 102 participates in ATP binding; sequence GRSGCGKS.

It belongs to the ABC transporter superfamily. Aliphatic sulfonates importer (TC 3.A.1.17.2) family. As to quaternary structure, the complex is composed of two ATP-binding proteins (SsuB), two transmembrane proteins (SsuC) and a solute-binding protein (SsuA).

The protein localises to the cell inner membrane. It catalyses the reaction ATP + H2O + aliphatic sulfonate-[sulfonate-binding protein]Side 1 = ADP + phosphate + aliphatic sulfonateSide 2 + [sulfonate-binding protein]Side 1.. Functionally, part of the ABC transporter complex SsuABC involved in aliphatic sulfonates import. Responsible for energy coupling to the transport system. This chain is Aliphatic sulfonates import ATP-binding protein SsuB 1, found in Burkholderia cenocepacia (strain HI2424).